A 336-amino-acid chain; its full sequence is Cinnamoyl-CoA reductase 2 (336 aa).

Residues 21-27, arginine 46, lysine 52, 72-73, 92-94, tyrosine 165, lysine 169, 192-195, and serine 207 contribute to the NADP(+) site; these read GAGGFIA, DL, TAS, and PVVV. A disulfide bridge connects residues cysteine 158 and cysteine 166. Lysine 169 serves as the catalytic Proton donor.

The protein belongs to the NAD(P)-dependent epimerase/dehydratase family. Dihydroflavonol-4-reductase subfamily. In terms of processing, the formation of a reversible disulfide bond reduces activity by perturbing the positioning of nearby catalytic residues. Mainly expressed in roots and stems, especially at the second internode and, to a lower extent, in leaves and flowers. Localized in vascular elements, with weaker expression in the interfascicular (xylem fiber) region.

The protein localises to the cytoplasm. It catalyses the reaction (E)-coniferaldehyde + NADP(+) + CoA = (E)-feruloyl-CoA + NADPH + H(+). The catalysed reaction is (E)-4-coumaraldehyde + NADP(+) + CoA = (E)-4-coumaroyl-CoA + NADPH + H(+). The enzyme catalyses (E)-sinapaldehyde + NADP(+) + CoA = (E)-sinapoyl-CoA + NADPH + H(+). It carries out the reaction (E)-cinnamaldehyde + NADP(+) + CoA = (E)-cinnamoyl-CoA + NADPH + H(+). It catalyses the reaction (E)-caffeyl aldehyde + NADP(+) + CoA = (E)-caffeoyl-CoA + NADPH + H(+). Its pathway is aromatic compound metabolism; phenylpropanoid biosynthesis. Involved in the latter stages of lignin biosynthesis. Catalyzes one of the last steps of monolignol biosynthesis, the conversion of cinnamoyl-CoAs into their corresponding cinnamaldehydes. Mediates the conversion of caffeoyl-CoA and coumaroyl-CoA to caffaldehyde and coumaraldehyde, respectively. Also active, with a lower efficiency, toward feruloyl-CoA and sinapoyl-CoA. Involved in the production of floral volatile phenylpropanoids in flowers of fragrant cultivars from cinnamic acid, a common precursor with the anthocyanin biosynthesis pathway involved in flower pigmentation. The polypeptide is Cinnamoyl-CoA reductase 2 (Medicago truncatula (Barrel medic)).